The following is a 392-amino-acid chain: Alanine--glyoxylate aminotransferase (392 aa).

Thr-9 is modified (phosphothreonine). Position 209 is an N6-(pyridoxal phosphate)lysine (Lys-209). Lys-225 bears the N6-acetyllysine; alternate mark. Lys-225 carries the post-translational modification N6-succinyllysine; alternate. N6-acetyllysine is present on residues Lys-234 and Lys-312. Arg-360 is a substrate binding site.

Belongs to the class-V pyridoxal-phosphate-dependent aminotransferase family. As to quaternary structure, homodimer. It depends on pyridoxal 5'-phosphate as a cofactor. In terms of tissue distribution, liver.

It localises to the peroxisome. The enzyme catalyses L-serine + pyruvate = 3-hydroxypyruvate + L-alanine. The catalysed reaction is glyoxylate + L-alanine = glycine + pyruvate. Alanine--glyoxylate aminotransferase activity is inhibited by 1 mM (aminooxy)acetic acid by 97.5%. Peroxisomal aminotransferase that catalyzes the transamination of glyoxylate to glycine and contributes to the glyoxylate detoxification. Also catalyzes the transamination between L-serine and pyruvate and contributes to gluconeogenesis from the L-serine metabolism. The polypeptide is Alanine--glyoxylate aminotransferase (Homo sapiens (Human)).